Reading from the N-terminus, the 285-residue chain is Acetyl-coenzyme A carboxylase carboxyl transferase subunit beta (285 aa).

Residues 29–285 form the CoA carboxyltransferase N-terminal domain; the sequence is IMTKCPKCKK…ILKIHQEVTK (257 aa). Residues Cys-33, Cys-36, Cys-52, and Cys-55 each coordinate Zn(2+). The segment at 33-55 adopts a C4-type zinc-finger fold; the sequence is CPKCKKIMYTKELAENLNVCFNC.

This sequence belongs to the AccD/PCCB family. In terms of assembly, acetyl-CoA carboxylase is a heterohexamer composed of biotin carboxyl carrier protein (AccB), biotin carboxylase (AccC) and two subunits each of ACCase subunit alpha (AccA) and ACCase subunit beta (AccD). Requires Zn(2+) as cofactor.

The protein localises to the cytoplasm. It carries out the reaction N(6)-carboxybiotinyl-L-lysyl-[protein] + acetyl-CoA = N(6)-biotinyl-L-lysyl-[protein] + malonyl-CoA. It functions in the pathway lipid metabolism; malonyl-CoA biosynthesis; malonyl-CoA from acetyl-CoA: step 1/1. Functionally, component of the acetyl coenzyme A carboxylase (ACC) complex. Biotin carboxylase (BC) catalyzes the carboxylation of biotin on its carrier protein (BCCP) and then the CO(2) group is transferred by the transcarboxylase to acetyl-CoA to form malonyl-CoA. This chain is Acetyl-coenzyme A carboxylase carboxyl transferase subunit beta, found in Staphylococcus aureus (strain Newman).